We begin with the raw amino-acid sequence, 148 residues long: Ubiquitin-conjugating enzyme E2-17 kDa (148 aa).

A UBC core domain is found at M1–M147. Catalysis depends on C85, which acts as the Glycyl thioester intermediate.

Belongs to the ubiquitin-conjugating enzyme family.

It carries out the reaction S-ubiquitinyl-[E1 ubiquitin-activating enzyme]-L-cysteine + [E2 ubiquitin-conjugating enzyme]-L-cysteine = [E1 ubiquitin-activating enzyme]-L-cysteine + S-ubiquitinyl-[E2 ubiquitin-conjugating enzyme]-L-cysteine.. It participates in protein modification; protein ubiquitination. Catalyzes the covalent attachment of ubiquitin to other proteins. Mediates the selective degradation of short-lived and abnormal proteins. This is Ubiquitin-conjugating enzyme E2-17 kDa from Solanum lycopersicum (Tomato).